The primary structure comprises 146 residues: Mitochondrial DnaJ homolog 2 (146 aa).

The J domain maps to 85–146 (EALLILDISA…LERSVLLRKR (62 aa)).

Interacts with PAM16/TIM16 and is recruited by the PAM complex.

It localises to the mitochondrion inner membrane. Plays a role in mitochondrial biogenesis and protein folding. Participates in the translocation of transit peptide-containing proteins from the inner membrane into the mitochondrial matrix in an ATP-dependent manner, probably by stimulating activity of mtHSP70 (SSC1). This chain is Mitochondrial DnaJ homolog 2 (MDJ2), found in Saccharomyces cerevisiae (strain ATCC 204508 / S288c) (Baker's yeast).